The sequence spans 64 residues: Large ribosomal subunit protein eL37 (64 aa).

Positions 20, 23, 35, and 38 each coordinate Zn(2+). Residues 20 to 38 (CRRCGRRAFHVRKKVCAAC) form a C4-type zinc finger.

Belongs to the eukaryotic ribosomal protein eL37 family. The cofactor is Zn(2+).

Its function is as follows. Binds to the 23S rRNA. This Methanococcus maripaludis (strain C6 / ATCC BAA-1332) protein is Large ribosomal subunit protein eL37.